We begin with the raw amino-acid sequence, 192 residues long: Cysteine and glycine-rich protein 1 (192 aa).

The LIM zinc-binding 1 domain occupies 10 to 61 (CGVCQKAVYFAEEVQCEGSSFHKSCFLCMVCKKNLDSTTVAVHGDEIYCKSC). The short motif at 64-69 (KKYGPK) is the Nuclear localization signal element. Positions 118–169 (CPRCGQAVYAAEKVIGAGKSWHKSCFRCAKCGKSLESTTLADKDGEIYCKGC) constitute an LIM zinc-binding 2 domain.

As to quaternary structure, probable monomer. Interacts with ZYX. Most prominent in tissues that are enriched in smooth muscle cells, such as gizzard, stomach, and intestine. Lower level in the heart, no expression in liver, skeletal muscle, or brain.

Its subcellular location is the nucleus. The protein resides in the cytoplasm. It is found in the cytoskeleton. Its function is as follows. Heat stable protein, that interacts with zyxin/ZYX. May be a component of a signal transduction pathway that mediates adhesion-stimulated changes in gene expression. In Gallus gallus (Chicken), this protein is Cysteine and glycine-rich protein 1 (CSRP1).